We begin with the raw amino-acid sequence, 335 residues long: DNA primase small subunit PriS (335 aa).

Residues D96, D98, and D243 contribute to the active site.

This sequence belongs to the eukaryotic-type primase small subunit family. In terms of assembly, heterodimer of a small subunit (PriS) and a large subunit (PriL). The cofactor is Mg(2+). Mn(2+) serves as cofactor.

Catalytic subunit of DNA primase, an RNA polymerase that catalyzes the synthesis of short RNA molecules used as primers for DNA polymerase during DNA replication. The small subunit contains the primase catalytic core and has DNA synthesis activity on its own. Binding to the large subunit stabilizes and modulates the activity, increasing the rate of DNA synthesis while decreasing the length of the DNA fragments, and conferring RNA synthesis capability. The DNA polymerase activity may enable DNA primase to also catalyze primer extension after primer synthesis. May also play a role in DNA repair. This is DNA primase small subunit PriS from Archaeoglobus fulgidus (strain ATCC 49558 / DSM 4304 / JCM 9628 / NBRC 100126 / VC-16).